The primary structure comprises 155 residues: Small ribosomal subunit protein uS7 (155 aa).

Belongs to the universal ribosomal protein uS7 family. As to quaternary structure, part of the 30S ribosomal subunit. Contacts proteins S9 and S11.

In terms of biological role, one of the primary rRNA binding proteins, it binds directly to 16S rRNA where it nucleates assembly of the head domain of the 30S subunit. Is located at the subunit interface close to the decoding center, probably blocks exit of the E-site tRNA. The chain is Small ribosomal subunit protein uS7 from Petrotoga mobilis (strain DSM 10674 / SJ95).